A 229-amino-acid chain; its full sequence is Large ribosomal subunit protein uL1 (229 aa).

This sequence belongs to the universal ribosomal protein uL1 family. In terms of assembly, part of the 50S ribosomal subunit.

Binds directly to 23S rRNA. The L1 stalk is quite mobile in the ribosome, and is involved in E site tRNA release. Its function is as follows. Protein L1 is also a translational repressor protein, it controls the translation of the L11 operon by binding to its mRNA. The chain is Large ribosomal subunit protein uL1 from Lactococcus lactis subsp. cremoris (strain MG1363).